Reading from the N-terminus, the 430-residue chain is MKLKLSSISMNHKNVLLIKLISAILISFFAFRLFILHSSEFSPIFASVTGKFEARFLPPEIIVPENEDLIPQDIEVEKCDLFAGKWIPDSVGPIYTNKSCGSLIDGHQNCITNGRPDLDFLYWKWKPHDCLLPRFDPRRFLQLMRHKSWAFIGDSISRNHVESLLCMLSTIEEPVEVYHDMEYKSKRWHFPLHNLTVSNIWSPFLVQAAIFEDSNGVSTASVQLHLDRLDETWTSLMPSFDYAIISTGKWFLKSAIYHENAKLVGCHNCQEKPHIEELGFDYAYNASLHNVMDFLAAEDNSKGTVFFRTSTPDHFQNGEWHSGGTCKQTEPVSDEEIEIKDVHKILKDIEIDQFKRAVREKTNQDGGNLKLLDFTRMLLTRPDGHPGEYRQFRPFDKDKNAKVQNDCLHWCLPGPFDYLNDVILETIVNG.

Residues 15-35 (VLLIKLISAILISFFAFRLFI) traverse the membrane as a helical; Signal-anchor for type II membrane protein segment. The GDS motif motif lies at 153–155 (GDS). Residues 406 to 420 (DCLHWCLPGPFDYLN) carry the DCXHWCLPGXXDXWN motif motif.

The protein belongs to the PC-esterase family. TBL subfamily.

It is found in the membrane. In terms of biological role, may act as a bridging protein that binds pectin and other cell wall polysaccharides. Probably involved in maintaining esterification of pectins. May be involved in the specific O-acetylation of cell wall polymers. The protein is Protein trichome birefringence-like 24 (TBL24) of Arabidopsis thaliana (Mouse-ear cress).